The primary structure comprises 877 residues: ABC transporter A family member 1 (877 aa).

The next 7 membrane-spanning stretches (helical) occupy residues 46–66 (YFST…LFLI), 268–288 (VWGG…LLYK), 324–344 (ILIS…FFLG), 347–367 (FFVL…VAFF), 379–399 (IGIG…FSGM), 420–440 (IILF…IGNV), and 479–499 (LLAL…IIPG). Positions 552-788 (LIICGLSKSY…YGEGYSVNIV (237 aa)) constitute an ABC transporter domain. 591 to 598 (GSNGCGKS) contributes to the ATP binding site.

The protein belongs to the ABC transporter superfamily. ABCA family.

Its subcellular location is the membrane. The polypeptide is ABC transporter A family member 1 (abcA1) (Dictyostelium discoideum (Social amoeba)).